The sequence spans 339 residues: Protein FAM76B (339 aa).

A2 carries the post-translational modification N-acetylalanine. Phosphoserine is present on residues S22 and S148. The tract at residues 144 to 243 is disordered; that stretch reads EQRKSLGSSH…INQSADSGGT (100 aa). Low complexity predominate over residues 148-160; that stretch reads SLGSSHSNSSSSS. Residues 167-189 show a composition bias toward basic residues; that stretch reads HHPKHHHHHHHHHHRHSSSHHKI. S193 is subject to Phosphoserine. The residue at position 215 (T215) is a Phosphothreonine. The segment covering 215 to 224 has biased composition (basic and acidic residues); that stretch reads TPKKKPKLES. The segment covering 228–243 has biased composition (polar residues); sequence NGDSSSINQSADSGGT. Positions 248–328 form a coiled coil; sequence LISQLKEEVM…QVAALSKGKK (81 aa).

This sequence belongs to the FAM76 family. In terms of assembly, interacts with HNRNPA2B1 (via C-terminus); the interaction results in retention of HNRNPA2B1 in the nucleus and inhibition of the NF-kappa-B-mediated inflammatory pathway.

It localises to the nucleus speckle. In terms of biological role, negatively regulates the NF-kappa-B-mediated inflammatory pathway by preventing the translocation of HNRNPA2B1 from the nucleus to the cytoplasm. Inhibits the PI3K/Akt/NF-kappa-B pathway-mediated polarization of M1 macrophages by binding to and stabilizing PIK3CD mRNA, resulting in increased levels of PIK3CD protein and increased levels of phosphorylated downstream target AKT which leads to decreased NF-kappa-B signaling. The protein is Protein FAM76B (FAM76B) of Homo sapiens (Human).